The sequence spans 79 residues: D-alanyl carrier protein (79 aa).

The Carrier domain maps to 1 to 77 (MDIKSEVLAI…KIVAGVTELC (77 aa)). Ser35 carries the O-(pantetheine 4'-phosphoryl)serine modification.

It belongs to the DltC family. Post-translationally, 4'-phosphopantetheine is transferred from CoA to a specific serine of apo-DCP.

It localises to the cytoplasm. The protein operates within cell wall biogenesis; lipoteichoic acid biosynthesis. In terms of biological role, carrier protein involved in the D-alanylation of lipoteichoic acid (LTA). The loading of thioester-linked D-alanine onto DltC is catalyzed by D-alanine--D-alanyl carrier protein ligase DltA. The DltC-carried D-alanyl group is further transferred to cell membrane phosphatidylglycerol (PG) by forming an ester bond, probably catalyzed by DltD. D-alanylation of LTA plays an important role in modulating the properties of the cell wall in Gram-positive bacteria, influencing the net charge of the cell wall. This chain is D-alanyl carrier protein, found in Streptococcus agalactiae serotype Ia (strain ATCC 27591 / A909 / CDC SS700).